The following is a 747-amino-acid chain: MDDDGLLLNFAAPDSNASSKSSAQKPVKVSGGRWKDRRKLQLSLSGRGRNKRAETGVNKESIAQPRDFSSSKPQSFREEQLAKRPKYFESRGEGGKNETYVSSLFTSNTKSKLENEKVEEEKTYLPSNAPMKGADDFNGLGLNDNLVHHLTESLRFKNPTQIQKSVIPSLLSTSRDLFVKAQTGSGKTLSFLLPILHKLMQEKKNPITRESGVFAIVLVPTRELANQIYGVLETLTRCHHQIVPGIVIGGEKKKSEKARIRKGVNILVATPGRLADHIENTTSLDLSQLRYLILDEGDRLIDLGFEETITKITDTITRCSRISESTQKWQGLPTKRVNVLCSATMENNVEKLGSIILNNPEQISIDTSKSREGDEIDSKSMAPAQLTQRVVVVPAKLRLVTLSAVLKEVAKTAPTSSTEIVRTIVFFSCSDSVNFHYEAFKRNGSEFRKARNAETNRFEMVTVGEDEANAEGSDTEIPKISSAPTISANSVVYKLHGSLTQQVRTSTLQSFVQAVPFDNSENNYNHLILLCTDVASRGLDLPNISSVVEYDPPFSVQDHLHRIGRTARLGNKGSSYLFLLPGIEEGYVDGKIRVVHPEGSIRITNYETILQNAFGDSSEIKKSDPKSKQGKWDMHATTWHLDIERWLLEDAASHESAKQAFTSHIRAYATHLSSEKTFFNVKTLHLGHLAKSFGLREPPKKLGSLATKSSSTRKEYGEKSRKLEDPRKKMLRMAKLAASSASSEFNY.

Disordered stretches follow at residues 1–102 (MDDD…TYVS) and 111–130 (SKLE…SNAP). Positions 15–24 (SNASSKSSAQ) are enriched in polar residues. 2 stretches are compositionally biased toward basic and acidic residues: residues 75-96 (SFRE…EGGK) and 111-123 (SKLE…EEKT). Positions 135–164 (DDFNGLGLNDNLVHHLTESLRFKNPTQIQK) match the Q motif motif. The region spanning 168–363 (PSLLSTSRDL…SIILNNPEQI (196 aa)) is the Helicase ATP-binding domain. 181–188 (AQTGSGKT) lines the ATP pocket. The DEAD box signature appears at 295-298 (DEGD). Residues 401–626 (TLSAVLKEVA…SSEIKKSDPK (226 aa)) form the Helicase C-terminal domain. Residues 700 to 729 (KKLGSLATKSSSTRKEYGEKSRKLEDPRKK) are disordered. Basic and acidic residues predominate over residues 712-728 (TRKEYGEKSRKLEDPRK).

Belongs to the DEAD box helicase family. DDX31/DBP7 subfamily.

It localises to the nucleus. The protein resides in the nucleolus. It carries out the reaction ATP + H2O = ADP + phosphate + H(+). Its function is as follows. ATP-binding RNA helicase involved in the biogenesis of 60S ribosomal subunits and is required for the normal formation of 25S and 5.8S rRNAs. The chain is ATP-dependent RNA helicase DBP7 (DBP7) from Meyerozyma guilliermondii (strain ATCC 6260 / CBS 566 / DSM 6381 / JCM 1539 / NBRC 10279 / NRRL Y-324) (Yeast).